A 197-amino-acid polypeptide reads, in one-letter code: Nucleoside triphosphate pyrophosphatase (197 aa).

Catalysis depends on aspartate 71, which acts as the Proton acceptor.

The protein belongs to the Maf family. Requires a divalent metal cation as cofactor.

It is found in the cytoplasm. The catalysed reaction is a ribonucleoside 5'-triphosphate + H2O = a ribonucleoside 5'-phosphate + diphosphate + H(+). It carries out the reaction a 2'-deoxyribonucleoside 5'-triphosphate + H2O = a 2'-deoxyribonucleoside 5'-phosphate + diphosphate + H(+). In terms of biological role, nucleoside triphosphate pyrophosphatase. May have a dual role in cell division arrest and in preventing the incorporation of modified nucleotides into cellular nucleic acids. This chain is Nucleoside triphosphate pyrophosphatase, found in Trichormus variabilis (strain ATCC 29413 / PCC 7937) (Anabaena variabilis).